The primary structure comprises 227 residues: Cytidylate kinase (227 aa).

ATP is bound at residue 11–19; that stretch reads GPSGAGKGT.

The protein belongs to the cytidylate kinase family. Type 1 subfamily.

Its subcellular location is the cytoplasm. It carries out the reaction CMP + ATP = CDP + ADP. It catalyses the reaction dCMP + ATP = dCDP + ADP. This Pasteurella multocida (strain Pm70) protein is Cytidylate kinase.